A 442-amino-acid polypeptide reads, in one-letter code: GTPase HflX (442 aa).

In terms of domain architecture, Hflx-type G spans 186-362 (VLVALAGYTN…ALNRVVLKLP (177 aa)). Residues 192–199 (GYTNAGKS), 217–221 (FTTLD), 238–241 (DTVG), 306–309 (NKID), and 341–343 (SAR) each bind GTP. Residues Ser-199 and Thr-219 each contribute to the Mg(2+) site.

The protein belongs to the TRAFAC class OBG-HflX-like GTPase superfamily. HflX GTPase family. Monomer. Associates with the 50S ribosomal subunit. Mg(2+) is required as a cofactor.

The protein localises to the cytoplasm. Its function is as follows. GTPase that associates with the 50S ribosomal subunit and may have a role during protein synthesis or ribosome biogenesis. The sequence is that of GTPase HflX from Thermococcus kodakarensis (strain ATCC BAA-918 / JCM 12380 / KOD1) (Pyrococcus kodakaraensis (strain KOD1)).